We begin with the raw amino-acid sequence, 381 residues long: Protein-glutamate methylesterase/protein-glutamine glutaminase (381 aa).

Positions 20–138 constitute a Response regulatory domain; the sequence is RVMVVDDSVV…EIAAADIFKH (119 aa). Asp71 is modified (4-aspartylphosphate). Positions 154-176 are disordered; it reads PAALASAREPEPRPIQATPVPAH. Residues 183–373 enclose the CheB-type methylesterase domain; sequence PFSTHAPRAL…PLQQIAPKLV (191 aa). Residues Ser197, His225, and Asp321 contribute to the active site.

It belongs to the CheB family. Phosphorylated by CheA. Phosphorylation of the N-terminal regulatory domain activates the methylesterase activity.

The protein localises to the cytoplasm. The catalysed reaction is [protein]-L-glutamate 5-O-methyl ester + H2O = L-glutamyl-[protein] + methanol + H(+). It carries out the reaction L-glutaminyl-[protein] + H2O = L-glutamyl-[protein] + NH4(+). Its function is as follows. Involved in chemotaxis. Part of a chemotaxis signal transduction system that modulates chemotaxis in response to various stimuli. Catalyzes the demethylation of specific methylglutamate residues introduced into the chemoreceptors (methyl-accepting chemotaxis proteins or MCP) by CheR. Also mediates the irreversible deamidation of specific glutamine residues to glutamic acid. The protein is Protein-glutamate methylesterase/protein-glutamine glutaminase of Nitrobacter hamburgensis (strain DSM 10229 / NCIMB 13809 / X14).